The chain runs to 87 residues: MALKEEFEEHAVKAKTLPESTSNENKLILYGLYKQSTVGPVDTGRPGMFSPRERAKWDAWKAVEGKSKEEAMGDYITKVKQLLEESA.

One can recognise an ACB domain in the interval 3–87; sequence LKEEFEEHAV…KVKQLLEESA (85 aa). An acyl-CoA is bound by residues 30–34, Lys-56, and Tyr-75; that span reads YGLYK.

It belongs to the ACBP family.

Functionally, binds medium- and long-chain acyl-CoA esters with very high affinity and may function as an intracellular carrier of acyl-CoA esters. This is Acyl-CoA-binding protein (ACABP) from Fritillaria agrestis (Stinkbells).